A 1041-amino-acid polypeptide reads, in one-letter code: FHIP family protein GF15501 (1041 aa).

2 disordered regions span residues 797–856 and 907–987; these read RKGN…NKRR and SNSS…SEPV. Ser-803 bears the Phosphoserine mark. Residues 808–824 are compositionally biased toward low complexity; the sequence is NLQQQQALNPAQQQGQQ. Polar residues-rich tracts occupy residues 825 to 843 and 907 to 933; these read RSAY…TPTS and SNSS…LSTQ. The span at 942–973 shows a compositional bias: low complexity; it reads SGSSSNSSMGGSSQTLSAHSNATTTHSSSTLH.

Belongs to the FHIP family.

The chain is FHIP family protein GF15501 from Drosophila ananassae (Fruit fly).